The following is a 193-amino-acid chain: D-alanyl-D-alanine dipeptidase (193 aa).

Zn(2+) is bound by residues H98 and D105. Residue E162 is the Proton donor/acceptor of the active site. A Zn(2+)-binding site is contributed by H165.

The protein belongs to the peptidase M15D family. It depends on Zn(2+) as a cofactor.

Its subcellular location is the cytoplasm. The catalysed reaction is D-alanyl-D-alanine + H2O = 2 D-alanine. Functionally, catalyzes hydrolysis of the D-alanyl-D-alanine dipeptide. May have a role in cell-wall turnover. In Escherichia coli (strain K12), this protein is D-alanyl-D-alanine dipeptidase.